We begin with the raw amino-acid sequence, 161 residues long: Lectin-like protein EP153R (161 aa).

Topologically, residues 1–30 are cytoplasmic; the sequence is MFSNKKYIGLIDKYCEKKILDDSSTIKICY. Residues 31–51 form a helical membrane-spanning segment; the sequence is ILIGILIGTNMITLIYNFIFW. Residues 52-161 lie on the Extracellular side of the membrane; that stretch reads ENYITCNQKD…HVSLLYICSK (110 aa). A disulfide bridge links cysteine 66 with cysteine 77. Positions 66–160 are lectin-like; sequence CPKDWVGYNN…KHVSLLYICS (95 aa). Asparagine 89, asparagine 98, asparagine 104, asparagine 110, asparagine 116, asparagine 130, and asparagine 136 each carry an N-linked (GlcNAc...) asparagine; by host glycan. An intrachain disulfide couples cysteine 94 to cysteine 159.

The protein belongs to the asfivirus lectin-like protein family. As to quaternary structure, homodimer.

The protein resides in the host endoplasmic reticulum membrane. In terms of biological role, down-regulates MHC-I expression by impairing the appropriate configuration or presentation into the plasma membrane of the latter. Participates in viral hemadsorption, which may help viral spread. Reduces the transactivating activity of host TP53, thus inhibiting apoptosis. Non-essential for virus growth in swine macrophage cell cultures. The chain is Lectin-like protein EP153R from African swine fever virus (isolate Tick/Malawi/Lil 20-1/1983) (ASFV).